Consider the following 278-residue polypeptide: 4-diphosphocytidyl-2-C-methyl-D-erythritol kinase (278 aa).

Lys9 is a catalytic residue. ATP is bound at residue Pro89–Ala99. The active site involves Asp128.

Belongs to the GHMP kinase family. IspE subfamily.

The catalysed reaction is 4-CDP-2-C-methyl-D-erythritol + ATP = 4-CDP-2-C-methyl-D-erythritol 2-phosphate + ADP + H(+). Its pathway is isoprenoid biosynthesis; isopentenyl diphosphate biosynthesis via DXP pathway; isopentenyl diphosphate from 1-deoxy-D-xylulose 5-phosphate: step 3/6. In terms of biological role, catalyzes the phosphorylation of the position 2 hydroxy group of 4-diphosphocytidyl-2C-methyl-D-erythritol. The protein is 4-diphosphocytidyl-2-C-methyl-D-erythritol kinase of Cereibacter sphaeroides (strain ATCC 17029 / ATH 2.4.9) (Rhodobacter sphaeroides).